Here is a 203-residue protein sequence, read N- to C-terminus: 5-formyltetrahydrofolate cyclo-ligase (203 aa).

Alanine 2 carries the N-acetylalanine modification. Residues 10 to 14 and arginine 14 contribute to the ATP site; that span reads KRGLR. Substrate-binding positions include leucine 56, glutamate 61, and 148-152; that span reads RGKGY. 145-153 lines the ATP pocket; sequence RLGRGKGYY. Positions 154 and 189 each coordinate Mg(2+).

It belongs to the 5-formyltetrahydrofolate cyclo-ligase family. As to quaternary structure, monomer. Mg(2+) serves as cofactor.

Its subcellular location is the cytoplasm. It carries out the reaction (6S)-5-formyl-5,6,7,8-tetrahydrofolate + ATP = (6R)-5,10-methenyltetrahydrofolate + ADP + phosphate. Contributes to tetrahydrofolate metabolism. Helps regulate carbon flow through the folate-dependent one-carbon metabolic network that supplies carbon for the biosynthesis of purines, thymidine and amino acids. Catalyzes the irreversible conversion of 5-formyltetrahydrofolate (5-CHO-H(4)PteGlu) to yield 5,10-methenyltetrahydrofolate. This is 5-formyltetrahydrofolate cyclo-ligase (Mthfs) from Mus musculus (Mouse).